A 210-amino-acid polypeptide reads, in one-letter code: Cell division protein SepF (210 aa).

The protein belongs to the SepF family. Homodimer. Interacts with FtsZ.

The protein localises to the cytoplasm. Functionally, cell division protein that is part of the divisome complex and is recruited early to the Z-ring. Probably stimulates Z-ring formation, perhaps through the cross-linking of FtsZ protofilaments. Its function overlaps with FtsA. The polypeptide is Cell division protein SepF (Mycobacterium leprae (strain Br4923)).